We begin with the raw amino-acid sequence, 72 residues long: Heat-stable enterotoxin ST-IA/ST-P (72 aa).

A signal peptide spans 1–19 (MKKLMLAIFISVLSFPSFS). Positions 20 to 54 (QSTESLDSSKEKITLETKKCDVVKNNSEKKSENMN) are excised as a propeptide. Cystine bridges form between Cys59–Cys64, Cys60–Cys68, and Cys63–Cys71.

The protein belongs to the heat-stable enterotoxin family.

The protein resides in the secreted. In terms of biological role, toxin which activates the particulate form of guanylate cyclase and increases cyclic GMP levels within the host intestinal epithelial cells. The polypeptide is Heat-stable enterotoxin ST-IA/ST-P (sta1) (Escherichia coli).